We begin with the raw amino-acid sequence, 604 residues long: Procollagen galactosyltransferase 1 (604 aa).

The signal sequence occupies residues 1–18 (MHLLCFFFLLLWTGPARS). N-linked (GlcNAc...) asparagine glycans are attached at residues Asn-78, Asn-166, Asn-363, and Asn-561. Residues 570 to 580 (RARSRKSREQE) are compositionally biased toward basic and acidic residues. The interval 570–604 (RARSRKSREQEELSSEAQNTDVLQSPLDSTARDEL) is disordered. The segment covering 584–597 (SEAQNTDVLQSPLD) has biased composition (polar residues). The Prevents secretion from ER signature appears at 601 to 604 (RDEL).

This sequence belongs to the glycosyltransferase 25 family.

It is found in the endoplasmic reticulum lumen. It catalyses the reaction (5R)-5-hydroxy-L-lysyl-[collagen] + UDP-alpha-D-galactose = (5R)-5-O-(beta-D-galactosyl)-5-hydroxy-L-lysyl-[collagen] + UDP + H(+). Functionally, beta-galactosyltransferase that transfers beta-galactose to hydroxylysine residues of type I collagen. By acting on collagen glycosylation, facilitates the formation of collagen triple helix. This is Procollagen galactosyltransferase 1 (colgalt1) from Danio rerio (Zebrafish).